We begin with the raw amino-acid sequence, 573 residues long: 60 kDa lysophospholipase (573 aa).

The 347-residue stretch at 9 to 355 (RRLLAVYTGG…DVRKELLTKD (347 aa)) folds into the Asparaginase/glutaminase domain. Residue threonine 19 is the Acyl-ester intermediate of the active site. The tract at residues 41–350 (TLPMFHDEEH…PGLSLDVRKE (310 aa)) is asparaginase. Residues 84–86 (DSS) and 116–117 (TD) each bind substrate. 5 ANK repeats span residues 141–170 (GAQV…YVIP), 399–429 (ALVP…DLGL), 433–462 (NGQT…DVNT), 466–495 (DGFS…SLST), and 533–562 (DGHS…AVGA).

The protein in the N-terminal section; belongs to the asparaginase 1 family. As to quaternary structure, monomer.

It catalyses the reaction a 1-acyl-sn-glycero-3-phosphocholine + H2O = sn-glycerol 3-phosphocholine + a fatty acid + H(+). The catalysed reaction is L-asparagine + H2O = L-aspartate + NH4(+). The enzyme catalyses a 1-O-alkyl-2-acetyl-sn-glycero-3-phosphocholine + H2O = a 1-O-alkyl-sn-glycero-3-phosphocholine + acetate + H(+). It carries out the reaction 1-hexadecanoyl-sn-glycero-3-phosphocholine + H2O = sn-glycerol 3-phosphocholine + hexadecanoate + H(+). It catalyses the reaction 2 1-hexadecanoyl-sn-glycero-3-phosphocholine = 1,2-dihexadecanoyl-sn-glycero-3-phosphocholine + sn-glycerol 3-phosphocholine. The catalysed reaction is 1-octadecanoyl-sn-glycero-3-phosphocholine + H2O = octadecanoate + sn-glycerol 3-phosphocholine + H(+). The enzyme catalyses 1-(9Z-octadecenoyl)-sn-glycero-3-phosphocholine + H2O = sn-glycerol 3-phosphocholine + (9Z)-octadecenoate + H(+). It carries out the reaction 1-hexadecanoyl-sn-glycero-3-phosphoethanolamine + H2O = sn-glycero-3-phosphoethanolamine + hexadecanoate + H(+). It catalyses the reaction 1-(9Z-octadecenoyl)-sn-glycero-3-phosphoethanolamine + H2O = sn-glycero-3-phosphoethanolamine + (9Z)-octadecenoate + H(+). The catalysed reaction is 1-hexadecanoyl-sn-glycero-3-phosphoethanolamine + 1-hexadecanoyl-sn-glycero-3-phosphocholine = 1,2-dihexadecanoyl-sn-glycero-3-phosphoethanolamine + sn-glycerol 3-phosphocholine. The enzyme catalyses 2-(5Z,8Z,11Z,14Z)-eicosatetraenoyl-sn-glycero-3-phosphocholine + H2O = sn-glycerol 3-phosphocholine + (5Z,8Z,11Z,14Z)-eicosatetraenoate + H(+). It carries out the reaction 2-hexadecanoyl-sn-glycero-3-phosphocholine + H2O = sn-glycerol 3-phosphocholine + hexadecanoate + H(+). It catalyses the reaction 2 2-hexadecanoyl-sn-glycero-3-phosphocholine = 1,2-dihexadecanoyl-sn-glycero-3-phosphocholine + sn-glycerol 3-phosphocholine. The catalysed reaction is 1-O-(9Z)-octadecenoyl-2-O-acetyl-sn-glycero-3-phosphocholine + H2O = 2-acetyl-sn-glycero-3-phosphocholine + (9Z)-octadecenoate + H(+). The enzyme catalyses a 1-acyl-sn-glycero-3-phospho-(1D-myo-inositol) + 1-hexadecanoyl-sn-glycero-3-phosphocholine = a 1-acyl-2-hexadecanoyl-sn-glycero-3-phospho-(1D-myo-inositol) + sn-glycerol 3-phosphocholine. It carries out the reaction 2 2-(5Z,8Z,11Z,14Z)-eicosatetraenoyl-sn-glycero-3-phosphocholine = 1,2-di-(5Z,8Z,11Z,14Z-eicosatetraenoyl)-sn-glycero-3-phosphocholine + sn-glycerol 3-phosphocholine. In terms of biological role, exhibits lysophospholipase, transacylase, PAF acetylhydrolase and asparaginase activities. Can catalyze three types of transacylation reactions: (1) acyl transfer from 1-acyl-sn-glycero-3-phosphocholine (1-acyl-GPC) to the sn-1(3) positions of glycerol and 2-acylglycerol (sn-1 to -1(3) transfer), (2) acyl transfer from 1-acyl-GPC to the sn-2 positions of 1-acyl-GPC, 1-acyl-sn-glycero-3-phosphoethanolamine (1-acyl-GPE), and other lysophospholipids (sn-1 to -2 transfer) and (3) acyl transfer from 2-acyl-GPC to the sn-1 position of 2-acyl-GPC and 2-acyl-GPE (sn-2 to -1 transfer). Mediates the synthesis of 1-arachidonoyl species of phospholipids by transferring the arachidonoyl residue from 2-arachidonoyl lysophospholipid to the sn-1 position of 2-acyl lysophospholipid. The sequence is that of 60 kDa lysophospholipase (ASPG) from Homo sapiens (Human).